Here is a 385-residue protein sequence, read N- to C-terminus: 8-amino-7-oxononanoate synthase (385 aa).

Arginine 23 serves as a coordination point for substrate. Glycine 110 to phenylalanine 111 contributes to the pyridoxal 5'-phosphate binding site. Histidine 135 is a binding site for substrate. Positions 180, 208, and 234 each coordinate pyridoxal 5'-phosphate. Lysine 237 bears the N6-(pyridoxal phosphate)lysine mark. Threonine 350 lines the substrate pocket.

The protein belongs to the class-II pyridoxal-phosphate-dependent aminotransferase family. BioF subfamily. Homodimer. The cofactor is pyridoxal 5'-phosphate.

It carries out the reaction 6-carboxyhexanoyl-[ACP] + L-alanine + H(+) = (8S)-8-amino-7-oxononanoate + holo-[ACP] + CO2. The protein operates within cofactor biosynthesis; biotin biosynthesis. In terms of biological role, catalyzes the decarboxylative condensation of pimeloyl-[acyl-carrier protein] and L-alanine to produce 8-amino-7-oxononanoate (AON), [acyl-carrier protein], and carbon dioxide. This Vibrio vulnificus (strain CMCP6) protein is 8-amino-7-oxononanoate synthase.